The primary structure comprises 1058 residues: MPKRKDIQKIMVIGSGPIIIGQAAEFDYAGTQACLALKEEGYKVILVNSNPATIMTDKEIADKVYIEPLTLEFVNRIIRKERPDAILPTLGGQTGLNMAMALSKAGILDDLEIELLGTKLSAIDQAEDRDLFKQLMQELDQPIPESTIVKTVDEAVTFARDIGYPVIVRPAFTLGGTGGGICSSEEELCEITENGLKLSPVTQCLIERSIAGFKEIEYEVMRDSADNALVVCNMENFDPVGIHTGDSIVFAPTQTLSDIENQMLRDASLKIIRALKIEGGCNVQLALDPYSFKYYVIEVNPRVSRSSALASKATGYPIAKLAAKIAVGLTLDEMINPITGTTYAMFEPALDYVVAKIPRFPFDKFEHGERQLGTQMKATGEVMAIGRNLEESLLKACRSLEIGVCHNEMTSLSNISDEELVTKVIKAQDDRLFYLSEAIRRGYSIEELESLTKIDLFFLDKLLHIVEIEQELQMHVDHLESLKKAKRYGFSDQKIAEIWQKDESDIRAMRHSHSLYPVYKMVDTCAAEFDAKTPYFYSTYELENESVQSNKESILVLGSGPIRIGQGVEFDYATVHSVKAIQKAGYEAIIMNSNPETVSTDFSVSDKLYFEPLTFEDVMNVIDLEQPKGVIVQFGGQTAINLAQSLSDAGVTILGTQVEDLDRAEDRDLFEKALKELGIPQPQGQTATNEEEALEAAKKIGFPVLVRPSYVLGGRAMEIVENKEDLREYIRTAVKASPEHPILVDSYIFGKECEVDAISDGKSVLIPGIMEHIERAGVHSGDSMAVYPPQQLSKQIQETIAEYTKRLAIGLNCIGMMNVQFVIKNEQVYVIEVNPRASRTVPFLSKVTGIPMAQIATKLILGQTLKDLGYEDGLYPQSQLVHIKAPVFSFTKLAQVDSLLGPEMKSTGEVMGSDTSLEKALYKAFEANNSHLSEFGQIVFTIADDSKAEALSLARRFKAIGYQIMATQGTAAYFAEQGLSACLVGKIGDAANDIPTLVRHGHVQAIVNTVGIKRTADKDGQMIRSSAIEQGVPLFTALDTAKAMLTVLESRCFNIEAI.

Positions 1–401 (MPKRKDIQKI…SLLKACRSLE (401 aa)) are carboxyphosphate synthetic domain. ATP contacts are provided by R129, R169, G175, G176, R208, I210, E215, G241, I242, H243, Q284, and E298. Positions 133–327 (KQLMQELDQP…IAKLAAKIAV (195 aa)) constitute an ATP-grasp 1 domain. Positions 284, 298, and 300 each coordinate Mg(2+). Mn(2+) is bound by residues Q284, E298, and N300. The tract at residues 402 to 546 (IGVCHNEMTS…YSTYELENES (145 aa)) is oligomerization domain. The segment at 547–929 (VQSNKESILV…ALYKAFEANN (383 aa)) is carbamoyl phosphate synthetic domain. An ATP-grasp 2 domain is found at 671 to 861 (EKALKELGIP…MAQIATKLIL (191 aa)). Residues R707, S746, I748, E752, G777, V778, H779, S780, Q820, and E832 each contribute to the ATP site. Mg(2+) contacts are provided by Q820, E832, and N834. Residues Q820, E832, and N834 each coordinate Mn(2+). The MGS-like domain maps to 930-1058 (SHLSEFGQIV…ESRCFNIEAI (129 aa)). The tract at residues 930–1058 (SHLSEFGQIV…ESRCFNIEAI (129 aa)) is allosteric domain.

The protein belongs to the CarB family. In terms of assembly, composed of two chains; the small (or glutamine) chain promotes the hydrolysis of glutamine to ammonia, which is used by the large (or ammonia) chain to synthesize carbamoyl phosphate. Tetramer of heterodimers (alpha,beta)4. Requires Mg(2+) as cofactor. It depends on Mn(2+) as a cofactor.

It catalyses the reaction hydrogencarbonate + L-glutamine + 2 ATP + H2O = carbamoyl phosphate + L-glutamate + 2 ADP + phosphate + 2 H(+). It carries out the reaction hydrogencarbonate + NH4(+) + 2 ATP = carbamoyl phosphate + 2 ADP + phosphate + 2 H(+). The protein operates within amino-acid biosynthesis; L-arginine biosynthesis; carbamoyl phosphate from bicarbonate: step 1/1. It functions in the pathway pyrimidine metabolism; UMP biosynthesis via de novo pathway; (S)-dihydroorotate from bicarbonate: step 1/3. Large subunit of the glutamine-dependent carbamoyl phosphate synthetase (CPSase). CPSase catalyzes the formation of carbamoyl phosphate from the ammonia moiety of glutamine, carbonate, and phosphate donated by ATP, constituting the first step of 2 biosynthetic pathways, one leading to arginine and/or urea and the other to pyrimidine nucleotides. The large subunit (synthetase) binds the substrates ammonia (free or transferred from glutamine from the small subunit), hydrogencarbonate and ATP and carries out an ATP-coupled ligase reaction, activating hydrogencarbonate by forming carboxy phosphate which reacts with ammonia to form carbamoyl phosphate. The protein is Carbamoyl phosphate synthase large chain of Streptococcus pyogenes serotype M6 (strain ATCC BAA-946 / MGAS10394).